The following is a 303-amino-acid chain: N-acetyl-D-glucosamine kinase (303 aa).

Residues 4-11 (GFDIGGTK) and 133-140 (GVGGGLIF) contribute to the ATP site. Zn(2+) contacts are provided by H157, C177, C179, and C184.

It belongs to the ROK (NagC/XylR) family. NagK subfamily.

It carries out the reaction N-acetyl-D-glucosamine + ATP = N-acetyl-D-glucosamine 6-phosphate + ADP + H(+). Its pathway is cell wall biogenesis; peptidoglycan recycling. In terms of biological role, catalyzes the phosphorylation of N-acetyl-D-glucosamine (GlcNAc) derived from cell-wall degradation, yielding GlcNAc-6-P. In Escherichia coli O81 (strain ED1a), this protein is N-acetyl-D-glucosamine kinase.